A 132-amino-acid chain; its full sequence is Amicyanin (132 aa).

The N-terminal stretch at 1-26 is a signal peptide; the sequence is MISAKTLRPAIAAIALFAIGATGAWA. Q27 is subject to Pyrrolidone carboxylic acid. The region spanning 27–132 is the Plastocyanin-like domain; that stretch reads QDKITVTSEK…PFMRGKVIVE (106 aa). Cu cation contacts are provided by H80, C119, H122, and M125.

It depends on Cu cation as a cofactor.

Its subcellular location is the periplasm. The protein operates within one-carbon metabolism; methylamine degradation. In terms of biological role, primary acceptor of electrons from methylamine dehydrogenase. Passes those electrons on either a soluble cytochrome c or to pseudoazurin. This Paracoccus versutus (Thiobacillus versutus) protein is Amicyanin (mauC).